We begin with the raw amino-acid sequence, 23 residues long: Paralytic peptide 1 (23 aa).

A disulfide bond links Cys-7 and Cys-19.

It belongs to the GBP/PSP1/paralytic peptide family. In terms of tissue distribution, hemolymph.

In terms of biological role, causes rapid, rigid paralysis when injected into Lepidopteran larvae. The physiological role may be to reduce hemolymph loss following injury and promote wound healing. This chain is Paralytic peptide 1, found in Spodoptera exigua (Beet armyworm).